We begin with the raw amino-acid sequence, 648 residues long: MTLNAESEALVGVSHPLDPLSRVEIARAVAILKEGPAAAESFRFISVELREPSKDDLRAGVAVAREADAVLVDRAQARSFEAVVDLEAGTVDSWKLLAENIQPPFMLDEFAECEDACRKDPEVIAALAKRGLTNLDLVCFEPWSVGYFGEDNEGRRLMRALVFVRDEADDSPYAHPIENFIVFYDLNAGKVVRLEDDQAIPVPSARGNYLPKYVGEARTDLKPLNITQPEGASFTVTGNHVTWADWSFRVGFTPREGLVLHQLKFKDQGVDRPVINRASLSEMVVPYGDTAPVQAKKNAFDSGEYNIGNMANSLTLGCDCLGEIKYFDGHSVDSHGNPWTIENAICMHEEDDSILWKHFDFREGTAETRRSRKLVISFIATVANYEYAFYWHLFLDGSIEFLVKATGILSTAGQLPGEKNPYGQSLNNDGLYAPIHQHMFNVRMDFELDGVKNAVYEVDMEYPEHNPTGTAFMAVDRLLETEQKAIRKTNEAKHRFWKIANHESKNLVNEPVAYRLIPTNGIQLAARDDAYVSKRAQFARNNLWVTAYDRTERFAAGEYPNQATGADDGLHIWTQKDRNIVDTDLVVWYTFGMHHVVRLEDWPVMPRQNIGFMLEPHGFFNQNPTLNLPTSTSTTQTGEADTCCHTDK.

Residues 1–9 (MTLNAESEA) constitute a propeptide that is removed on maturation. 299 to 310 (AFDSGEYNIGNM) is a substrate binding site. The active-site Proton acceptor is the D301. A disulfide bond links C320 and C346. Substrate is bound at residue 382 to 387 (VANYEY). Catalysis depends on Y385, which acts as the Schiff-base intermediate with substrate; via topaquinone. The residue at position 385 (Y385) is a 2',4',5'-topaquinone. Residues H436 and H438 each contribute to the Cu cation site. Residues D445, F446, and D584 each contribute to the Mn(2+) site. H595 provides a ligand contact to Cu cation. The tract at residues 629 to 648 (PTSTSTTQTGEADTCCHTDK) is disordered.

The protein belongs to the copper/topaquinone oxidase family. As to quaternary structure, homodimer. Cu cation is required as a cofactor. Zn(2+) serves as cofactor. Requires L-topaquinone as cofactor. The cofactor is Mn(2+). Post-translationally, topaquinone (TPQ) is generated by copper-dependent autoxidation of a specific tyrosyl residue.

The catalysed reaction is a primary methyl amine + O2 + H2O = an aldehyde + H2O2 + NH4(+). This chain is Copper methylamine oxidase (maoII), found in Arthrobacter sp. (strain P1).